We begin with the raw amino-acid sequence, 64 residues long: Large ribosomal subunit protein eL37 (64 aa).

The C4-type zinc finger occupies 1 to 6; sequence GRCSAC. Positions 3 and 6 each coordinate Zn(2+).

This sequence belongs to the eukaryotic ribosomal protein eL37 family. Zn(2+) is required as a cofactor.

Binds to the 23S rRNA. This chain is Large ribosomal subunit protein eL37 (RPL37), found in Solanum lycopersicum (Tomato).